A 978-amino-acid polypeptide reads, in one-letter code: Peroxisomal ATPase PEX6 (978 aa).

Arg-119 carries the post-translational modification Omega-N-methylarginine. Residues 470–477 (GPPGSGKT) and 742–749 (GPPGTGKT) each bind ATP.

This sequence belongs to the AAA ATPase family. As to quaternary structure, interacts with PEX1; forming the PEX1-PEX6 AAA ATPase complex, which is composed of a heterohexamer formed by a trimer of PEX1-PEX6 dimers. Interacts with PEX26; interaction is direct and promotes recruitment to peroxisomal membranes. Interacts with ZFAND6.

It is found in the cytoplasm. The protein resides in the cytosol. Its subcellular location is the peroxisome membrane. The protein localises to the cell projection. It localises to the cilium. It is found in the photoreceptor outer segment. It catalyses the reaction ATP + H2O = ADP + phosphate + H(+). Functionally, component of the PEX1-PEX6 AAA ATPase complex, a protein dislocase complex that mediates the ATP-dependent extraction of the PEX5 receptor from peroxisomal membranes, an essential step for PEX5 recycling. Specifically recognizes PEX5 monoubiquitinated at 'Cys-11', and pulls it out of the peroxisome lumen through the PEX2-PEX10-PEX12 retrotranslocation channel. Extraction by the PEX1-PEX6 AAA ATPase complex is accompanied by unfolding of the TPR repeats and release of bound cargo from PEX5. The protein is Peroxisomal ATPase PEX6 of Rattus norvegicus (Rat).